The chain runs to 530 residues: Structure-specific endonuclease subunit SLX1 homolog 2 (530 aa).

The 86-residue stretch at 4 to 89 (RFHCVYLLTS…PTKSTRLKTQ (86 aa)) folds into the GIY-YIG domain. An SLX1-type zinc finger spans residues 232–365 (CALCSLPLRS…PSQPCPCPLC (134 aa)). Disordered stretches follow at residues 276-306 (ATMGQSTRNERSGEYSNKIKDDSNDGTMDAH), 410-438 (NSSLTERKSRRKAKPALGQKRNRGEYCGD), and 474-502 (LPPSGDEGYACDSSRRGVGGSKHTTRMTD). Positions 283-298 (RNERSGEYSNKIKDDS) are enriched in basic and acidic residues.

Belongs to the SLX1 family. As to quaternary structure, forms a heterodimer with a member of the SLX4 family. A divalent metal cation serves as cofactor.

The protein localises to the nucleus. Its function is as follows. Catalytic subunit of a heterodimeric structure-specific endonuclease that resolves DNA secondary structures generated during DNA repair and recombination. Has endonuclease activity towards branched DNA substrates, introducing single-strand cuts in duplex DNA close to junctions with ss-DNA. This is Structure-specific endonuclease subunit SLX1 homolog 2 from Trypanosoma cruzi (strain CL Brener).